The sequence spans 506 residues: MPDTAPQLRLYNTLTRTKEAFAPIDAKNVRMYVCGPTVYDFAHIGNARPVIVFDVLFRLLRHVYGAQHVTYARNITDVDDKINARAARDYPDLPFNEAIRKVTESTNAQFQADVTALGNLQPTVQPRATEHMDEMRAMIDRLVQRGVAYVAQDHVLFSPSAMDARKGPRYGALARRSLDEMLAGARVDVASYKRDEMDFVLWKPSKKGEPGWPSPAGIETLGRPGWHIECSAMSMAKLLEPFGGGLKCDDPERNQFDIHGGGIDLVFPHHENEIAQSCCALGTERMANIWMHNGFLQVEGQKMSKSLGNFITIRDVLNDGLPQLGEWGDNTVRDRWAGLAARLSMLQTHYREPINWTAQRLAESADELHRWYGLLRDEGFGAPEKLSHASAVAAALCDDLNSWAAITALRQAFKVRDVAALGEGMALMGLLDPYFVTASDVPIFARADVDASAIAARIAERLNFINAKNWAEADRIRDELLQEGVQLKDSKDSATGERITTWDVVG.

Residue Cys-34 coordinates Zn(2+). Positions 36-46 (PTVYDFAHIGN) match the 'HIGH' region motif. Residues Cys-230, His-269, and Glu-273 each contribute to the Zn(2+) site. Positions 302–306 (KMSKS) match the 'KMSKS' region motif. Residue Lys-305 coordinates ATP.

Belongs to the class-I aminoacyl-tRNA synthetase family. In terms of assembly, monomer. The cofactor is Zn(2+).

Its subcellular location is the cytoplasm. It carries out the reaction tRNA(Cys) + L-cysteine + ATP = L-cysteinyl-tRNA(Cys) + AMP + diphosphate. The polypeptide is Cysteine--tRNA ligase (Brucella ovis (strain ATCC 25840 / 63/290 / NCTC 10512)).